Here is a 274-residue protein sequence, read N- to C-terminus: Diaminopimelate epimerase (274 aa).

Substrate-binding residues include N11, Q44, and N64. C73 acts as the Proton donor in catalysis. Residues 74–75 (GN), N157, N190, and 208–209 (ER) contribute to the substrate site. C217 functions as the Proton acceptor in the catalytic mechanism. 218–219 (GS) is a substrate binding site.

Belongs to the diaminopimelate epimerase family. In terms of assembly, homodimer.

Its subcellular location is the cytoplasm. It carries out the reaction (2S,6S)-2,6-diaminopimelate = meso-2,6-diaminopimelate. Its pathway is amino-acid biosynthesis; L-lysine biosynthesis via DAP pathway; DL-2,6-diaminopimelate from LL-2,6-diaminopimelate: step 1/1. Functionally, catalyzes the stereoinversion of LL-2,6-diaminopimelate (L,L-DAP) to meso-diaminopimelate (meso-DAP), a precursor of L-lysine and an essential component of the bacterial peptidoglycan. This Edwardsiella ictaluri (strain 93-146) protein is Diaminopimelate epimerase.